Consider the following 437-residue polypeptide: Ribosomal protein uS12 methylthiotransferase RimO (437 aa).

An MTTase N-terminal domain is found at 4 to 114 (PRVSFVSLGC…VMAAVHEAAP (111 aa)). [4Fe-4S] cluster contacts are provided by Cys-13, Cys-49, Cys-78, Cys-145, Cys-149, and Cys-152. One can recognise a Radical SAM core domain in the interval 131–369 (LTPRHYAYLK…MQRQQKISAT (239 aa)). The region spanning 372-437 (AKKVGKRLPV…DAYDLYGSAV (66 aa)) is the TRAM domain.

This sequence belongs to the methylthiotransferase family. RimO subfamily. [4Fe-4S] cluster serves as cofactor.

Its subcellular location is the cytoplasm. The enzyme catalyses L-aspartate(89)-[ribosomal protein uS12]-hydrogen + (sulfur carrier)-SH + AH2 + 2 S-adenosyl-L-methionine = 3-methylsulfanyl-L-aspartate(89)-[ribosomal protein uS12]-hydrogen + (sulfur carrier)-H + 5'-deoxyadenosine + L-methionine + A + S-adenosyl-L-homocysteine + 2 H(+). Functionally, catalyzes the methylthiolation of an aspartic acid residue of ribosomal protein uS12. This is Ribosomal protein uS12 methylthiotransferase RimO from Mesorhizobium japonicum (strain LMG 29417 / CECT 9101 / MAFF 303099) (Mesorhizobium loti (strain MAFF 303099)).